A 373-amino-acid polypeptide reads, in one-letter code: Ferroptosis suppressor protein 1 (373 aa).

Residue G2 is the site of N-myristoyl glycine attachment. A helical membrane pass occupies residues 7 to 27; sequence VESGALHVVIVGGGFGGIAAA. Residues 18–22, R54, and V82 contribute to the 6-hydroxy-FAD site; that span reads GGGFG. K168 is subject to N6-acetyllysine; by KAT2B. D285 contacts 6-hydroxy-FAD.

The protein belongs to the FAD-dependent oxidoreductase family. In terms of assembly, interacts with importin subunits KPNA2 and IPO5; this interaction likely mediates the translocation into the nucleus upon oxidative stress. 6-hydroxy-FAD is required as a cofactor. N-myristoylation at Gly-2 mediates the recruitment to lipid droplets and plasma membrane, enabling its anti-lipid peroxidation activity. In terms of processing, acetylation at Lys-168 prevents AIFM2 ubiquitination and degradation, thereby inhibiting ferroptosis. KAT2B mediates acetylation at Lys-168, while HDAC3 removes it. Post-translationally, ubiquitinated. AIFM2 undergoes 'Lys-29'-ubiquitination and proteasomal degradation, which is inhibited by acetylation at Lys-168. Detected in most normal tissues as two transcripts of 1.8 and 4.0 kb in length, respectively. Highly expressed in heart, moderately in liver and skeletal muscles, and expressed at low levels in placenta, lung, kidney, and pancreas. Both transcripts expressed following p53/TP53 induction. The shorter 1.8 kb transcript seems to be the major transcript in EB1 colon cancer cells.

It localises to the lipid droplet. It is found in the cell membrane. Its subcellular location is the cytoplasm. The protein resides in the mitochondrion membrane. The protein localises to the nucleus. It carries out the reaction ubiquinone-10 + NADH + H(+) = ubiquinol-10 + NAD(+). It catalyses the reaction phylloquinone + NADH + H(+) = phylloquinol + NAD(+). The enzyme catalyses menaquinone-4 + NADH + H(+) = menaquinol-4 + NAD(+). The catalysed reaction is menadione + NADH + H(+) = menadiol + NAD(+). Its activity is regulated as follows. The modification by 4-hydroxy-2-nonenal (HNE) adduction in mitochondria results in loss of the oxidoreductase activity and activation of a novel function in mitochondrial oxidative stress signaling. In terms of biological role, a NAD(P)H-dependent oxidoreductase that acts as a key inhibitor of ferroptosis. At the plasma membrane, catalyzes reduction of coenzyme Q/ubiquinone-10 to ubiquinol-10, a lipophilic radical-trapping antioxidant that prevents lipid oxidative damage and consequently ferroptosis. Acts in parallel to GPX4 to suppress phospholipid peroxidation and ferroptosis. This anti-ferroptotic function is independent of cellular glutathione levels. Also acts as a potent radical-trapping antioxidant by mediating warfarin-resistant vitamin K reduction in the canonical vitamin K cycle: catalyzes NAD(P)H-dependent reduction of vitamin K (phylloquinone, menaquinone-4 and menadione) to hydroquinone forms. Hydroquinones act as potent radical-trapping antioxidants inhibitor of phospholipid peroxidation and ferroptosis. May play a role in mitochondrial stress signaling. Upon oxidative stress, associates with the lipid peroxidation end product 4-hydroxy-2-nonenal (HNE) forming a lipid adduct devoid of oxidoreductase activity, which then translocates from mitochondria into the nucleus triggering DNA damage and cell death. Capable of DNA binding in a non-sequence specific way. The chain is Ferroptosis suppressor protein 1 from Homo sapiens (Human).